A 294-amino-acid polypeptide reads, in one-letter code: IVFRAAQERSDIEIVAINDLLDAEYMAYMLKYDSTHGRFNGSVEVKDGHLVVNGQTIRVTAEKDPANLKWNEVGVDVVAEATGIFLTDETARKHIAAGAKKVVLTGPSKDDTPMFVMGVNLKSYAGQEIVSNASCTTNCLAPLAKVINDKFGIVEALMTTVHATTATQKTVDGPFHKDWRGGRGASQNIIPSSTGAAKAVGKVIPELNGKLTGMAFRVPTPNVSVVDLTARLEKPASYKEVCAAIKEAAEGELKGVLGYTEDDVVSTDFNGEKLTSVFDAKAGIALNDNFVKLV.

Residues aspartate 19, lysine 63, and threonine 105 each coordinate NAD(+). Residues 134 to 136 (SCT), threonine 165, 194 to 195 (TG), and arginine 217 contribute to the D-glyceraldehyde 3-phosphate site. The Nucleophile role is filled by cysteine 135.

It belongs to the glyceraldehyde-3-phosphate dehydrogenase family. In terms of assembly, homotetramer.

It is found in the cytoplasm. It catalyses the reaction D-glyceraldehyde 3-phosphate + phosphate + NAD(+) = (2R)-3-phospho-glyceroyl phosphate + NADH + H(+). It functions in the pathway carbohydrate degradation; glycolysis; pyruvate from D-glyceraldehyde 3-phosphate: step 1/5. Its function is as follows. Catalyzes the oxidative phosphorylation of glyceraldehyde 3-phosphate (G3P) to 1,3-bisphosphoglycerate (BPG) using the cofactor NAD. The first reaction step involves the formation of a hemiacetal intermediate between G3P and a cysteine residue, and this hemiacetal intermediate is then oxidized to a thioester, with concomitant reduction of NAD to NADH. The reduced NADH is then exchanged with the second NAD, and the thioester is attacked by a nucleophilic inorganic phosphate to produce BPG. The protein is Glyceraldehyde-3-phosphate dehydrogenase (gap) of Serratia odorifera.